Consider the following 210-residue polypeptide: Redox-sensing transcriptional repressor Rex (210 aa).

A DNA-binding region (H-T-H motif) is located at residues 16–55; it reads VYSRHLTDVDRKGIVTISSGDIAEGVGVSPAQVRKDLAYF. 90 to 95 serves as a coordination point for NAD(+); sequence GMGNLG.

Belongs to the transcriptional regulatory Rex family. Homodimer.

The protein resides in the cytoplasm. Modulates transcription in response to changes in cellular NADH/NAD(+) redox state. This chain is Redox-sensing transcriptional repressor Rex, found in Desulfitobacterium hafniense (strain DSM 10664 / DCB-2).